The sequence spans 621 residues: Na(+)/H(+) antiporter NhaA (621 aa).

Positions M1–A430 are na(+)/H(+) antiporter NhaA. 11 consecutive transmembrane segments (helical) span residues G27 to L47, L72 to V92, L109 to V129, G139 to G159, V168 to V188, E192 to G212, V223 to A243, F300 to V320, V339 to V359, V375 to L395, and V409 to A429. A Thioredoxin domain is found at Q431–A578.

This sequence in the N-terminal section; belongs to the NhaA Na(+)/H(+) (TC 2.A.33) antiporter family.

The protein localises to the cell inner membrane. It catalyses the reaction Na(+)(in) + 2 H(+)(out) = Na(+)(out) + 2 H(+)(in). In terms of biological role, na(+)/H(+) antiporter that extrudes sodium in exchange for external protons. This chain is Na(+)/H(+) antiporter NhaA, found in Herminiimonas arsenicoxydans.